Reading from the N-terminus, the 212-residue chain is Coat protein (212 aa).

The protein belongs to the potexvirus capsid protein family.

It localises to the virion. Required for genome encapsidation. Forms ribonucleoprotein complexes along with TGB1 helicase and viral RNA. This chain is Coat protein, found in Chenopodium album (Fat hen).